A 112-amino-acid chain; its full sequence is DNA-binding protein TON_1102 (112 aa).

It belongs to the PDCD5 family.

This Thermococcus onnurineus (strain NA1) protein is DNA-binding protein TON_1102.